We begin with the raw amino-acid sequence, 85 residues long: Small ribosomal subunit protein uS17 (85 aa).

It belongs to the universal ribosomal protein uS17 family. As to quaternary structure, part of the 30S ribosomal subunit.

Its function is as follows. One of the primary rRNA binding proteins, it binds specifically to the 5'-end of 16S ribosomal RNA. The protein is Small ribosomal subunit protein uS17 of Desulforudis audaxviator (strain MP104C).